The chain runs to 240 residues: Protein GrpE (240 aa).

Residues 1 to 13 (MTDNQRQSTTDGQ) are compositionally biased toward polar residues. The tract at residues 1–89 (MTDNQRQSTT…DAEQKAEEHW (89 aa)) is disordered. Residues 20 to 38 (AQATAEAAEQTQATQASAA) show a composition bias toward low complexity. Basic and acidic residues predominate over residues 65 to 89 (EALRQRVEELEKALADAEQKAEEHW).

Belongs to the GrpE family. Homodimer.

It is found in the cytoplasm. In terms of biological role, participates actively in the response to hyperosmotic and heat shock by preventing the aggregation of stress-denatured proteins, in association with DnaK and GrpE. It is the nucleotide exchange factor for DnaK and may function as a thermosensor. Unfolded proteins bind initially to DnaJ; upon interaction with the DnaJ-bound protein, DnaK hydrolyzes its bound ATP, resulting in the formation of a stable complex. GrpE releases ADP from DnaK; ATP binding to DnaK triggers the release of the substrate protein, thus completing the reaction cycle. Several rounds of ATP-dependent interactions between DnaJ, DnaK and GrpE are required for fully efficient folding. This Halorhodospira halophila (strain DSM 244 / SL1) (Ectothiorhodospira halophila (strain DSM 244 / SL1)) protein is Protein GrpE.